A 332-amino-acid chain; its full sequence is tRNA-dihydrouridine synthase B (332 aa).

FMN contacts are provided by residues P19–A21 and Q73. The Proton donor role is filled by C103. FMN contacts are provided by residues K142, N203–D205, and G227–R228.

It belongs to the Dus family. DusB subfamily. FMN is required as a cofactor.

It carries out the reaction a 5,6-dihydrouridine in tRNA + NAD(+) = a uridine in tRNA + NADH + H(+). The enzyme catalyses a 5,6-dihydrouridine in tRNA + NADP(+) = a uridine in tRNA + NADPH + H(+). Functionally, catalyzes the synthesis of 5,6-dihydrouridine (D), a modified base found in the D-loop of most tRNAs, via the reduction of the C5-C6 double bond in target uridines. In Pseudomonas aeruginosa (strain ATCC 15692 / DSM 22644 / CIP 104116 / JCM 14847 / LMG 12228 / 1C / PRS 101 / PAO1), this protein is tRNA-dihydrouridine synthase B.